The chain runs to 160 residues: uncharacterized protein (160 aa).

The N-acetyltransferase domain occupies 2-140; that stretch reads MIIIPNNEIA…KARRLKPEIP (139 aa).

This is an uncharacterized protein from Bacillus subtilis (strain 168).